The sequence spans 259 residues: Thiazole synthase (259 aa).

The active-site Schiff-base intermediate with DXP is Lys95. Residues Gly156, 182 to 183 (AG), and 204 to 205 (NT) contribute to the 1-deoxy-D-xylulose 5-phosphate site.

It belongs to the ThiG family. Homotetramer. Forms heterodimers with either ThiH or ThiS.

It is found in the cytoplasm. The catalysed reaction is [ThiS sulfur-carrier protein]-C-terminal-Gly-aminoethanethioate + 2-iminoacetate + 1-deoxy-D-xylulose 5-phosphate = [ThiS sulfur-carrier protein]-C-terminal Gly-Gly + 2-[(2R,5Z)-2-carboxy-4-methylthiazol-5(2H)-ylidene]ethyl phosphate + 2 H2O + H(+). It functions in the pathway cofactor biosynthesis; thiamine diphosphate biosynthesis. Its function is as follows. Catalyzes the rearrangement of 1-deoxy-D-xylulose 5-phosphate (DXP) to produce the thiazole phosphate moiety of thiamine. Sulfur is provided by the thiocarboxylate moiety of the carrier protein ThiS. In vitro, sulfur can be provided by H(2)S. The protein is Thiazole synthase of Serratia proteamaculans (strain 568).